The sequence spans 608 residues: Kelch-like protein 10 (608 aa).

Residues 39–106 (CDVVIKVNGF…AYTRTVPITP (68 aa)) form the BTB domain. Kelch repeat units lie at residues 292 to 339 (ILFA…YLKG), 340 to 386 (YVYI…VLSN), 388 to 433 (IYAM…TLYG), 434 to 480 (KVYI…AYGE), 481 to 527 (HVYA…VVDD), and 529 to 574 (LFVV…VVPG). S501 is modified (phosphoserine).

Self-associates. Interacts with CUL3; indicative for the participation in an E3 ubiquitin ligase complex. Testis specific.

Its subcellular location is the cytoplasm. Its pathway is protein modification; protein ubiquitination. Its function is as follows. May be a substrate-specific adapter of a CUL3-based E3 ubiquitin-protein ligase complex which mediates the ubiquitination and subsequent proteasomal degradation of target proteins during spermatogenesis. Required for male fertility. This chain is Kelch-like protein 10 (Klhl10), found in Mus musculus (Mouse).